A 1453-amino-acid chain; its full sequence is DNA-directed RNA polymerase IV subunit 1 (1453 aa).

Cys-56, Cys-59, Cys-67, His-70, Cys-97, Cys-100, and Cys-121 together coordinate Zn(2+). Mg(2+) is bound by residues Asp-447, Asp-449, and Asp-451. Positions 806-818 are bridging helix; it reads PLESFVHSVTSRD.

This sequence belongs to the RNA polymerase beta' chain family. In terms of assembly, component of the RNA polymerase IV complex. Interacts with NRPD2, NRPD3, NRPD3B, NRPD4, NRPD5, NRPD5B, NRPD6A, NRPD7, NRPD7B, NRPD9A, NRPD9B, NRPD10, NRPD11, NRPD12, RDR2, RDM4, CLSY1, CLSY2, CLSY3, CLSY4 and SHH1. In terms of tissue distribution, mostly expressed in flowers, and, to a lower extent, in leaves.

It localises to the nucleus. The enzyme catalyses RNA(n) + a ribonucleoside 5'-triphosphate = RNA(n+1) + diphosphate. In terms of biological role, DNA-dependent RNA polymerase catalyzes the transcription of DNA into RNA using the four ribonucleoside triphosphates as substrates. Largest and catalytic component of RNA polymerase IV which mediates 24-nt short-interfering RNAs (siRNA) accumulation. Implicated in siRNA-directed heterochromatin formation through the action of DCL3 and AGO4, and subsequent DNA methylation-dependent silencing of targeted sequences. Essential component of a self-reinforcing loop coupling de novo DNA methylation to siRNA production. Required for intercellular but not intracellular RNA interference (RNAi) leading to systemic post-transcriptional gene silencing. Involved in the maintenance of post-transcriptional RNA silencing. This Arabidopsis thaliana (Mouse-ear cress) protein is DNA-directed RNA polymerase IV subunit 1 (NRPD1).